The following is a 465-amino-acid chain: MDFLPLFHSLQGRLALVVGGGEVALRKARLLADAGARLRVVAPQIHIELRHLVEQGGGELLERDYQDGDQPGCALIIAATDDEPLNAEVSRAANARGIPVNVVDAPALCSVIFPAIVDRSPLVVAVSSGGDAPVLARLIRAKLETWIPSTYGQLAGLASRFRHRVKELLPDLQQRRVFWENLFQGEIAERVLAGRPAEAERLLEERLAGGLAHIATGEVYLVGAGPGDPDLLTFRALRLMQQADVVLYDRLVAPSILELCRRDAERLYVGKRRAEHAVPQDRINRLLVELASQGKRVLRLKGGDPFIFGRGGEEIDELAARGIPFQVVPGITAASGCAAYAGIPLTHRDHAQSVRFVTGHLKDGTTDLPWQDLVAPGQTLVFYMGLVGLPVICEQLVAHGRSAQTPAALIQQGTTAQQRVFTGTLENLPQLVAEHEVHAPTLVIVGEVVQLRDKLAWFEGAREDA.

Residues 1-203 (MDFLPLFHSL…GRPAEAERLL (203 aa)) form a precorrin-2 dehydrogenase /sirohydrochlorin ferrochelatase region. NAD(+) is bound by residues 22-23 (EV) and 43-44 (PQ). At S128 the chain carries Phosphoserine. The interval 217-465 (GEVYLVGAGP…AWFEGAREDA (249 aa)) is uroporphyrinogen-III C-methyltransferase. P226 contributes to the S-adenosyl-L-methionine binding site. D249 functions as the Proton acceptor in the catalytic mechanism. The active-site Proton donor is K271. S-adenosyl-L-methionine is bound by residues 302 to 304 (GGD), I307, 332 to 333 (TA), M384, and G413.

The protein in the N-terminal section; belongs to the precorrin-2 dehydrogenase / sirohydrochlorin ferrochelatase family. This sequence in the C-terminal section; belongs to the precorrin methyltransferase family.

It catalyses the reaction uroporphyrinogen III + 2 S-adenosyl-L-methionine = precorrin-2 + 2 S-adenosyl-L-homocysteine + H(+). The catalysed reaction is precorrin-2 + NAD(+) = sirohydrochlorin + NADH + 2 H(+). The enzyme catalyses siroheme + 2 H(+) = sirohydrochlorin + Fe(2+). Its pathway is cofactor biosynthesis; adenosylcobalamin biosynthesis; precorrin-2 from uroporphyrinogen III: step 1/1. The protein operates within cofactor biosynthesis; adenosylcobalamin biosynthesis; sirohydrochlorin from precorrin-2: step 1/1. It functions in the pathway porphyrin-containing compound metabolism; siroheme biosynthesis; precorrin-2 from uroporphyrinogen III: step 1/1. It participates in porphyrin-containing compound metabolism; siroheme biosynthesis; siroheme from sirohydrochlorin: step 1/1. Its pathway is porphyrin-containing compound metabolism; siroheme biosynthesis; sirohydrochlorin from precorrin-2: step 1/1. In terms of biological role, multifunctional enzyme that catalyzes the SAM-dependent methylations of uroporphyrinogen III at position C-2 and C-7 to form precorrin-2 via precorrin-1. Then it catalyzes the NAD-dependent ring dehydrogenation of precorrin-2 to yield sirohydrochlorin. Finally, it catalyzes the ferrochelation of sirohydrochlorin to yield siroheme. The polypeptide is Siroheme synthase (Pseudomonas aeruginosa (strain UCBPP-PA14)).